A 540-amino-acid chain; its full sequence is Chaperonin GroEL (540 aa).

ATP-binding positions include 29–32 (TIGP), 86–90 (DGTTT), Gly-413, 476–478 (NAA), and Asp-492.

It belongs to the chaperonin (HSP60) family. As to quaternary structure, forms a cylinder of 14 subunits composed of two heptameric rings stacked back-to-back. Interacts with the co-chaperonin GroES.

Its subcellular location is the cytoplasm. It carries out the reaction ATP + H2O + a folded polypeptide = ADP + phosphate + an unfolded polypeptide.. Together with its co-chaperonin GroES, plays an essential role in assisting protein folding. The GroEL-GroES system forms a nano-cage that allows encapsulation of the non-native substrate proteins and provides a physical environment optimized to promote and accelerate protein folding. The polypeptide is Chaperonin GroEL (Staphylococcus saprophyticus subsp. saprophyticus (strain ATCC 15305 / DSM 20229 / NCIMB 8711 / NCTC 7292 / S-41)).